The sequence spans 227 residues: Ion-translocating oxidoreductase complex subunit E (227 aa).

5 helical membrane passes run 57 to 77, 89 to 109, 111 to 131, 146 to 166, and 200 to 220; these read LGLG…ISLF, IYVM…NAFA, PVYQ…IVIG, AFDG…LGAI, and GLLL…ILAV.

The protein belongs to the NqrDE/RnfAE family. In terms of assembly, the complex is composed of six subunits: RnfA, RnfB, RnfC, RnfD, RnfE and RnfG.

It is found in the cell inner membrane. Its function is as follows. Part of a membrane-bound complex that couples electron transfer with translocation of ions across the membrane. The polypeptide is Ion-translocating oxidoreductase complex subunit E (Haemophilus ducreyi (strain 35000HP / ATCC 700724)).